A 432-amino-acid chain; its full sequence is Adenylosuccinate synthetase (432 aa).

Residues 12 to 18 (GDEGKGK) and 40 to 42 (GHT) contribute to the GTP site. Residue Asp13 is the Proton acceptor of the active site. Mg(2+) is bound by residues Asp13 and Gly40. IMP-binding positions include 13 to 16 (DEGK), 38 to 41 (NAGH), Thr132, Arg146, Gln226, Thr241, and Arg305. His41 functions as the Proton donor in the catalytic mechanism. A substrate-binding site is contributed by 301–307 (TVTGRKR). GTP-binding positions include Arg307, 333 to 335 (KLD), and 415 to 417 (STS).

The protein belongs to the adenylosuccinate synthetase family. Homodimer. It depends on Mg(2+) as a cofactor.

Its subcellular location is the cytoplasm. The catalysed reaction is IMP + L-aspartate + GTP = N(6)-(1,2-dicarboxyethyl)-AMP + GDP + phosphate + 2 H(+). The protein operates within purine metabolism; AMP biosynthesis via de novo pathway; AMP from IMP: step 1/2. In terms of biological role, plays an important role in the de novo pathway of purine nucleotide biosynthesis. Catalyzes the first committed step in the biosynthesis of AMP from IMP. This chain is Adenylosuccinate synthetase, found in Agrobacterium fabrum (strain C58 / ATCC 33970) (Agrobacterium tumefaciens (strain C58)).